The chain runs to 264 residues: 3-methyl-2-oxobutanoate hydroxymethyltransferase (264 aa).

Residues Asp-45 and Asp-84 each coordinate Mg(2+). Residues 45–46, Asp-84, and Lys-112 contribute to the 3-methyl-2-oxobutanoate site; that span reads DS. Glu-114 provides a ligand contact to Mg(2+). The Proton acceptor role is filled by Glu-181.

The protein belongs to the PanB family. As to quaternary structure, homodecamer; pentamer of dimers. It depends on Mg(2+) as a cofactor.

The protein localises to the cytoplasm. It catalyses the reaction 3-methyl-2-oxobutanoate + (6R)-5,10-methylene-5,6,7,8-tetrahydrofolate + H2O = 2-dehydropantoate + (6S)-5,6,7,8-tetrahydrofolate. It participates in cofactor biosynthesis; (R)-pantothenate biosynthesis; (R)-pantoate from 3-methyl-2-oxobutanoate: step 1/2. Functionally, catalyzes the reversible reaction in which hydroxymethyl group from 5,10-methylenetetrahydrofolate is transferred onto alpha-ketoisovalerate to form ketopantoate. This is 3-methyl-2-oxobutanoate hydroxymethyltransferase from Shigella flexneri serotype 5b (strain 8401).